The following is a 143-amino-acid chain: Flagellar assembly factor FliW (143 aa).

Belongs to the FliW family. Interacts with translational regulator CsrA and flagellin(s).

Its subcellular location is the cytoplasm. Its function is as follows. Acts as an anti-CsrA protein, binds CsrA and prevents it from repressing translation of its target genes, one of which is flagellin. Binds to flagellin and participates in the assembly of the flagellum. This Clostridium botulinum (strain ATCC 19397 / Type A) protein is Flagellar assembly factor FliW.